The following is a 264-amino-acid chain: Thiazole synthase (264 aa).

The active-site Schiff-base intermediate with DXP is Lys-106. 1-deoxy-D-xylulose 5-phosphate contacts are provided by residues Gly-167, 193-194 (AG), and 215-216 (NT).

The protein belongs to the ThiG family. Homotetramer. Forms heterodimers with either ThiH or ThiS.

The protein resides in the cytoplasm. The enzyme catalyses [ThiS sulfur-carrier protein]-C-terminal-Gly-aminoethanethioate + 2-iminoacetate + 1-deoxy-D-xylulose 5-phosphate = [ThiS sulfur-carrier protein]-C-terminal Gly-Gly + 2-[(2R,5Z)-2-carboxy-4-methylthiazol-5(2H)-ylidene]ethyl phosphate + 2 H2O + H(+). The protein operates within cofactor biosynthesis; thiamine diphosphate biosynthesis. In terms of biological role, catalyzes the rearrangement of 1-deoxy-D-xylulose 5-phosphate (DXP) to produce the thiazole phosphate moiety of thiamine. Sulfur is provided by the thiocarboxylate moiety of the carrier protein ThiS. In vitro, sulfur can be provided by H(2)S. The sequence is that of Thiazole synthase from Xylella fastidiosa (strain 9a5c).